A 427-amino-acid chain; its full sequence is UPF0229 protein YeaH (427 aa).

A compositionally biased stretch (basic and acidic residues) spans 79-90; sequence NDHFVQNDRIER. Residues 79-110 form a disordered region; that stretch reads NDHFVQNDRIERPQGGGGGSGSGQGQASQDGE. Over residues 92–102 the composition is skewed to gly residues; the sequence is QGGGGGSGSGQ.

Belongs to the UPF0229 family.

This is UPF0229 protein YeaH from Escherichia coli O139:H28 (strain E24377A / ETEC).